A 1249-amino-acid polypeptide reads, in one-letter code: Protein STU1 (1249 aa).

2 stretches are compositionally biased toward low complexity: residues 138–156 and 555–574; these read LNSSGSLKAGSLSSSTATK and AASPMPSYASSSSTGAPSSA. Disordered stretches follow at residues 138-161, 545-619, 644-718, 755-846, 860-891, and 1084-1118; these read LNSSGSLKAGSLSSSTATKSKPHE, KQLE…NPVF, HVET…LGLG, AEHE…NGNI, AFQTPLNPKTSALRSSSAIRTPAWKDSPRPEA, and HPAPPSSSADNSDPMTSALSQLSLSSSKESPEKRT. Positions 581–600 are enriched in basic and acidic residues; sequence KKMDLKAMLAERRRAVKEAG. 2 stretches are compositionally biased toward low complexity: residues 647 to 667 and 708 to 718; these read TSSPSPVRSPTPSSSATRIRP and SPSLSPSLGLG. Positions 755–774 are enriched in basic and acidic residues; it reads AEHEVDELTLKEGQKTRDDG. Composition is skewed to polar residues over residues 809-822, 831-844, and 863-878; these read QQGNTFSTSTSGRV, ATGTTASLPNSRNG, and TPLNPKTSALRSSSAI. Residues 1089–1111 are compositionally biased toward low complexity; that stretch reads SSSADNSDPMTSALSQLSLSSSK.

It belongs to the CLASP family. As to quaternary structure, interacts with microtubules.

The protein localises to the cytoplasm. It localises to the cytoskeleton. Its subcellular location is the nucleus. It is found in the spindle. Its function is as follows. Microtubule binding protein that promotes the stabilization of dynamic microtubules. Required for mitotic spindle formation. The chain is Protein STU1 (STU1) from Cryptococcus neoformans var. neoformans serotype D (strain JEC21 / ATCC MYA-565) (Filobasidiella neoformans).